The sequence spans 489 residues: Serine/arginine-rich splicing factor 4 (489 aa).

The RRM 1 domain maps to 2–72 (PRVYIGRLSY…ERVIVEHARG (71 aa)). Disordered regions lie at residues 72-95 (GPRR…GRDK) and 169-489 (KIRL…HSRS). Phosphoserine occurs at positions 78 and 84. Residues 104-177 (YRLIVENLSS…RKIRLVEDKP (74 aa)) form the RRM 2 domain. Composition is skewed to basic residues over residues 179-206 (SRRR…KSRS) and 214-246 (SHSK…KKEK). Over residues 247-279 (SRSPSKDNKSRSRSRSPDKSRSKSKDHAEDKLQ) the composition is skewed to basic and acidic residues. S289, S291, and S293 each carry phosphoserine. The segment covering 293–332 (SRHDSKSRSRSQERRAEEERRRSVSRARSQEKSRSQEKSL) has biased composition (basic and acidic residues). Over residues 333–356 (LKSRSRSRSRSRSRSKDKRKGRKR) the composition is skewed to basic residues. Composition is skewed to basic and acidic residues over residues 357-370 (SRDE…SKSE) and 394-426 (KDTD…RAEG). A phosphoserine mark is found at S441, S453, and S455. Composition is skewed to basic residues over residues 456–469 (RSKS…RSKS) and 479–489 (SRSRSRSHSRS).

Belongs to the splicing factor SR family. Found in a pre-mRNA splicing complex with SRSF4/SFRS4, SRSF5/SFRS5, SNRNP70, SNRPA1, SRRM1 and SRRM2. Interacts with PNN. Extensively phosphorylated on serine residues in the RS domain.

The protein resides in the nucleus speckle. Functionally, plays a role in alternative splice site selection during pre-mRNA splicing. Represses the splicing of MAPT/Tau exon 10. This is Serine/arginine-rich splicing factor 4 (Srsf4) from Mus musculus (Mouse).